Here is a 95-residue protein sequence, read N- to C-terminus: MQIDDALLSKLEKLSSLKINDDKREEIKRQLSEIVSFVDVLNELDLKGSEAVVSSIKGGTLLREDSPIASDVIDIILKNAPSQEGHFFSVPKIIE.

Belongs to the GatC family. As to quaternary structure, heterotrimer of A, B and C subunits.

The catalysed reaction is L-glutamyl-tRNA(Gln) + L-glutamine + ATP + H2O = L-glutaminyl-tRNA(Gln) + L-glutamate + ADP + phosphate + H(+). It catalyses the reaction L-aspartyl-tRNA(Asn) + L-glutamine + ATP + H2O = L-asparaginyl-tRNA(Asn) + L-glutamate + ADP + phosphate + 2 H(+). Its function is as follows. Allows the formation of correctly charged Asn-tRNA(Asn) or Gln-tRNA(Gln) through the transamidation of misacylated Asp-tRNA(Asn) or Glu-tRNA(Gln) in organisms which lack either or both of asparaginyl-tRNA or glutaminyl-tRNA synthetases. The reaction takes place in the presence of glutamine and ATP through an activated phospho-Asp-tRNA(Asn) or phospho-Glu-tRNA(Gln). The sequence is that of Aspartyl/glutamyl-tRNA(Asn/Gln) amidotransferase subunit C from Campylobacter curvus (strain 525.92).